A 284-amino-acid chain; its full sequence is NH(3)-dependent NAD(+) synthetase (284 aa).

51–58 (GISGGIDS) provides a ligand contact to ATP. Aspartate 57 provides a ligand contact to Mg(2+). Deamido-NAD(+) is bound at residue arginine 148. Threonine 168 is an ATP binding site. A Mg(2+)-binding site is contributed by glutamate 173. Residues lysine 181 and aspartate 188 each coordinate deamido-NAD(+). Lysine 197 and threonine 219 together coordinate ATP. 268-269 (HK) serves as a coordination point for deamido-NAD(+).

The protein belongs to the NAD synthetase family. Homodimer.

It carries out the reaction deamido-NAD(+) + NH4(+) + ATP = AMP + diphosphate + NAD(+) + H(+). It functions in the pathway cofactor biosynthesis; NAD(+) biosynthesis; NAD(+) from deamido-NAD(+) (ammonia route): step 1/1. Its function is as follows. Catalyzes the ATP-dependent amidation of deamido-NAD to form NAD. Uses ammonia as a nitrogen source. In Burkholderia pseudomallei (strain 1106a), this protein is NH(3)-dependent NAD(+) synthetase.